A 188-amino-acid chain; its full sequence is PRA1 family protein F4 (188 aa).

Positions 1-13 (MANNDEITTSSHA) are enriched in polar residues. Positions 1–25 (MANNDEITTSSHASPAVNHESISRA) are disordered. 4 consecutive transmembrane segments (helical) span residues 67-86 (YFRS…SLIW), 90-107 (SLIV…LYFL), 119-139 (IDDR…LLLT), and 142-162 (TFNI…HAVI).

This sequence belongs to the PRA1 family.

It is found in the endosome membrane. Its function is as follows. May be involved in both secretory and endocytic intracellular trafficking in the endosomal/prevacuolar compartments. The chain is PRA1 family protein F4 (PRA1F4) from Arabidopsis thaliana (Mouse-ear cress).